Reading from the N-terminus, the 171-residue chain is ATP synthase subunit b (171 aa).

Residues 26–48 (LINLAIIIGLLVYAGRGFLGNLL) form a helical membrane-spanning segment.

The protein belongs to the ATPase B chain family. F-type ATPases have 2 components, F(1) - the catalytic core - and F(0) - the membrane proton channel. F(1) has five subunits: alpha(3), beta(3), gamma(1), delta(1), epsilon(1). F(0) has four main subunits: a(1), b(1), b'(1) and c(10-14). The alpha and beta chains form an alternating ring which encloses part of the gamma chain. F(1) is attached to F(0) by a central stalk formed by the gamma and epsilon chains, while a peripheral stalk is formed by the delta, b and b' chains.

It localises to the cellular thylakoid membrane. In terms of biological role, f(1)F(0) ATP synthase produces ATP from ADP in the presence of a proton or sodium gradient. F-type ATPases consist of two structural domains, F(1) containing the extramembraneous catalytic core and F(0) containing the membrane proton channel, linked together by a central stalk and a peripheral stalk. During catalysis, ATP synthesis in the catalytic domain of F(1) is coupled via a rotary mechanism of the central stalk subunits to proton translocation. Its function is as follows. Component of the F(0) channel, it forms part of the peripheral stalk, linking F(1) to F(0). The protein is ATP synthase subunit b of Synechococcus elongatus (strain ATCC 33912 / PCC 7942 / FACHB-805) (Anacystis nidulans R2).